Consider the following 68-residue polypeptide: Serine palmitoyltransferase small subunit A (68 aa).

At 1-9 (MAFGDAWKQ) the chain is on the cytoplasmic side. A helical membrane pass occupies residues 10–26 (LSWFYYQYLLVTALYML). The Lumenal portion of the chain corresponds to 27–31 (EPWER). Residues 32–54 (TIFNSLLISVAAMAVYTGYVFMP) traverse the membrane as a helical segment. Residues 55-68 (QHIMAILHYFEVVQ) are Cytoplasmic-facing.

This sequence belongs to the SPTSS family. SPTSSA subfamily. Component of the serine palmitoyltransferase (SPT) complex, which is composed of SPTLC1, SPTLC2 or SPTLC3 and SPTSSA or SPTSSB. The heterodimer consisting of SPTLC1 and SPTLC2/SPTLC3 forms the catalytic core of the enzyme, while SPTSSA or SPTSSB subunits determine substrate specificity. SPT also interacts with ORMDL proteins, especially ORMDL3, which negatively regulate SPT activity in the presence of ceramides.

Its subcellular location is the endoplasmic reticulum membrane. The protein operates within lipid metabolism; sphingolipid metabolism. Component of the serine palmitoyltransferase multisubunit enzyme (SPT) that catalyzes the initial and rate-limiting step in sphingolipid biosynthesis by condensing L-serine and activated acyl-CoA (most commonly palmitoyl-CoA) to form long-chain bases. The SPT complex is composed of SPTLC1, SPTLC2 or SPTLC3 and SPTSSA or SPTSSB. Within this complex, the heterodimer consisting of SPTLC1 and SPTLC2/SPTLC3 forms the catalytic core. Within the SPT complex, SPTSSA stimulates the catalytic activity and plays a role in substrate specificity, which depends upon the overall complex composition. The SPTLC1-SPTLC2-SPTSSA complex shows a strong preference for C16-CoA substrate, while the SPTLC1-SPTLC3-SPTSSA isozyme uses both C14-CoA and C16-CoA as substrates, with a slight preference for C14-CoA. Independently of its action as a SPT component, may be involved in MBOAT7 localization to mitochondria-associated membranes, a membrane bridge between the endoplasmic reticulum and mitochondria, may hence affect MBOAT7-catalyzed incorporation of arachidonic acid into phosphatidylinositol. The sequence is that of Serine palmitoyltransferase small subunit A (sptssa) from Danio rerio (Zebrafish).